The primary structure comprises 88 residues: RNA-binding protein Hfq (88 aa).

The 60-residue stretch at Asp9–Val68 folds into the Sm domain. The interval Arg66–Glu88 is disordered. Residues Thr72 to Glu88 show a composition bias toward basic and acidic residues.

This sequence belongs to the Hfq family. Homohexamer.

In terms of biological role, RNA chaperone that binds small regulatory RNA (sRNAs) and mRNAs to facilitate mRNA translational regulation in response to envelope stress, environmental stress and changes in metabolite concentrations. Also binds with high specificity to tRNAs. This Aliivibrio salmonicida (strain LFI1238) (Vibrio salmonicida (strain LFI1238)) protein is RNA-binding protein Hfq.